A 419-amino-acid chain; its full sequence is Histidine--tRNA ligase (419 aa).

It belongs to the class-II aminoacyl-tRNA synthetase family. In terms of assembly, homodimer.

It is found in the cytoplasm. It catalyses the reaction tRNA(His) + L-histidine + ATP = L-histidyl-tRNA(His) + AMP + diphosphate + H(+). The sequence is that of Histidine--tRNA ligase from Caldicellulosiruptor saccharolyticus (strain ATCC 43494 / DSM 8903 / Tp8T 6331).